A 1400-amino-acid chain; its full sequence is MKDLLNFLKAQHKTEEFDAIKIGLSSPDMIRSWSFGEVKKPETINYRTFKPERDGLFCARIFGPVKDYECLCGKYKRLKHRGVICEKCGVEVTQTKVRRDRMGHIELASPVAHIWFLKSLPSRIGLLMDIPLRDIERVLYFEMYVVTEPGMTDLEKGQMLTEEEYLDRLEEWGDEFTAKMGAEAIKDLLGSMDMHAEAEQMREELETTNSETKRKKVTKRLKLVEAFIASGNNPEWMILTVLPVLPPDLRPLVPLDGGRFATSDLNDLYRRVINRNNRLKRLLELAAPDIIVRNEKRMLQESVDALLDNGRRGRAITGSNKRPLKSLADMIKGKQGRFRQNLLGKRVDYSGRSVITVGPYLRLHQCGLPKKMALELFKPFIYSKLETRGLATTIKAAKKMVEREEAVVWDILDEVIREHPVLLNRAPTLHRLGIQAFEPVLIEGKAIQLHPLVCAAYNADFDGDQMAVHVPLTLEAQLEARTLMMSTNNILSPASGDPIIVPSQDVVLGLYYMTREKINVKGEGMYLSGPAEAEKAYRTKQAELHARVKVRITETVVDEDGNSTTETKMVDTTVGRAMLWQIVPAGLPYSIVNQKLGKKQISNLLNEAYRKLGLKDTVIFADQIMYTGFAYAALSGVSVGIDDMVVPPAKYTEIAEAEEEVREIQEQYQSGLVTAGERYNKVIDIWASTNDRVAKAMMENLSSETVVNREGEEEQQESFNSIYMMADSGARGSAAQIRQLAGMRGLMARPDGSIIETPITANFKEGLNVLQYFISTHGARKGLADTALKTANSGYLTRRLVDVAQDVVVTEHDCGTHEGVDMMPHIEGGDVKVALSELALGRVVAEDVLKPGTEDVLIPRNTLIDEKWCQIMEENSVDSMKVRSVVTCDSDFGCCAQCYGRDLARGHLVNQGEAVGVIAAQSIGEPGTQLTMRTFHIGGAASTAAAENSIQAKNNGSVKLHNAKFVTNKDGKLVITSRASELTIIDEFGRTKEKHKLPYGSLLSKGDNDAVEAGETVANWEAHTLPIITEVAGRIQFVDMIDGVTVSRQTDDLTGLSSSEVTDAAARPAAGKDMRPAIKLVDEQGNDVMIPGTEMPAHYFLPGKAIVNIEDGAEVGVGDTLARIPQKSGGNKDITGGLPRVADLFEARKPKEPAILAEHTGTVSFGKETKGKRRLVITRDSGEVYEEMIPKHRQLNVFEGERVERGDVIADGPESPHDILRLRGVHAVTQYIANEVQEVYRLQGVKINDKHIETIVRQMLRKCTITHAGDSEFLPGEQVEYSQVKIANRNLEAEGKEPARFERELLGITKASLATESFISAASFQETTRVLTEAAVSGKRDDLRGLKENVIVGRLIPAGTGFAYHQERQAKRAEAQEGPSAEQATDNLAALLNAGFSSDE.

Zn(2+)-binding residues include Cys-70, Cys-72, Cys-85, and Cys-88. Residues Asp-460, Asp-462, and Asp-464 each contribute to the Mg(2+) site. Positions 814, 888, 895, and 898 each coordinate Zn(2+). A disordered region spans residues 1368 to 1400 (RQAKRAEAQEGPSAEQATDNLAALLNAGFSSDE).

The protein belongs to the RNA polymerase beta' chain family. The RNAP catalytic core consists of 2 alpha, 1 beta, 1 beta' and 1 omega subunit. When a sigma factor is associated with the core the holoenzyme is formed, which can initiate transcription. Mg(2+) serves as cofactor. The cofactor is Zn(2+).

It catalyses the reaction RNA(n) + a ribonucleoside 5'-triphosphate = RNA(n+1) + diphosphate. Its function is as follows. DNA-dependent RNA polymerase catalyzes the transcription of DNA into RNA using the four ribonucleoside triphosphates as substrates. The protein is DNA-directed RNA polymerase subunit beta' of Vibrio parahaemolyticus serotype O3:K6 (strain RIMD 2210633).